The following is a 1090-amino-acid chain: Exocyst complex component SEC5B (1090 aa).

The segment covering 1 to 12 (MSSSDDLDEDEL) has biased composition (acidic residues). Residues 1-126 (MSSSDDLDED…ARKEDDRAWD (126 aa)) are disordered. The span at 23 to 46 (RDVTYQKPPSANSRKPVTNLVQQP) shows a compositional bias: polar residues. Residues 52 to 62 (AAAPPSKGGAK) show a composition bias toward low complexity. Positions 96 to 109 (GGGGDGGGGRGRGG) are enriched in gly residues. Residues 110 to 126 (SGKERGRARKEDDRAWD) show a composition bias toward basic and acidic residues. Phosphoserine is present on Ser-179. Residues 486-502 (VQLSDDTSSMEDNQVQV) show a composition bias toward polar residues. Disordered stretches follow at residues 486–511 (VQLS…ESAR), 984–1013 (ETVE…QSSV), and 1055–1090 (PVAK…PRRR). Over residues 999–1010 (RGSEDAISDDKQ) the composition is skewed to basic and acidic residues. A compositionally biased stretch (polar residues) spans 1062–1071 (SRTSTDSPSR).

Belongs to the SEC5 family. As to quaternary structure, the exocyst complex is composed of SEC3, SEC5, SEC6, SEC8, SEC10, EXO70A1 and EXO84B.

Functionally, component of the exocyst complex involved in the docking of exocytic vesicles with fusion sites on the plasma membrane during regulated or polarized secretion. Involved in polarized cell growth and organ morphogenesis. During cytokinesis, involved in cell plate initiation, cell plate maturation and formation of new primary cell wall. This chain is Exocyst complex component SEC5B (SEC5B), found in Arabidopsis thaliana (Mouse-ear cress).